A 410-amino-acid chain; its full sequence is MKCRTLYPLVPTFALAASLPLQALAEGFVDDAKASLTLRNFYMNRDYTGTASQGKAEEWTQSFIFDFKSGYTPGVVGFGVDVLGLYSIKLDGGKGTAGTQLLPVHDDGRPADDFGRTALAGKMRVSRTELKVGEWSPTLPILRADDGRSLPQTLQGAQVTSNELAGLSLYGGQFRQNSPRNDASMQDMSLFTRTAFTSDRFNFAGGEYRFNQERTLVGAWYAQLEDIYQQRYFQVQHQQPLGNWVLGANLGYFWGKDDGGAKAGELNNRTASGLFSAKLGGNTFYVGLQKVMGDDEWFRVNGASGGTLANDAFGSSYESARERSWQVRHDFNFVVLGIPGLTLMNRYIHGYNVHNASTQGRESELAYVVQSGPFKALNLKWRNSSQRRDWGSTNSFDENRLIVSYPLSLL.

Positions 1–25 (MKCRTLYPLVPTFALAASLPLQALA) are cleaved as a signal peptide.

It belongs to the outer membrane porin (Opr) (TC 1.B.25) family.

Functionally, probable transporter, possibly involved in the gallate degradation pathway. May play a role in the uptake of low gallate concentrations that may exist in the natural habitats of P.putida. This chain is Porin-like protein GalP (galP), found in Pseudomonas putida (strain ATCC 47054 / DSM 6125 / CFBP 8728 / NCIMB 11950 / KT2440).